Consider the following 423-residue polypeptide: Mannose-6-phosphate isomerase (423 aa).

A2 bears the N-acetylalanine mark. Phosphoserine is present on residues S102 and S108. Q110, H112, E137, and H276 together coordinate Zn(2+). The active site involves R295.

This sequence belongs to the mannose-6-phosphate isomerase type 1 family. Zn(2+) serves as cofactor.

The protein resides in the cytoplasm. The enzyme catalyses D-mannose 6-phosphate = D-fructose 6-phosphate. Its pathway is nucleotide-sugar biosynthesis; GDP-alpha-D-mannose biosynthesis; alpha-D-mannose 1-phosphate from D-fructose 6-phosphate: step 1/2. Its function is as follows. Isomerase that catalyzes the interconversion of fructose-6-P and mannose-6-P and has a critical role in the supply of D-mannose derivatives required for many eukaryotic glycosylation reactions. The chain is Mannose-6-phosphate isomerase from Rattus norvegicus (Rat).